Reading from the N-terminus, the 128-residue chain is Small ribosomal subunit protein uS11 (128 aa).

The protein belongs to the universal ribosomal protein uS11 family. In terms of assembly, part of the 30S ribosomal subunit. Interacts with proteins S7 and S18. Binds to IF-3.

Located on the platform of the 30S subunit, it bridges several disparate RNA helices of the 16S rRNA. Forms part of the Shine-Dalgarno cleft in the 70S ribosome. This is Small ribosomal subunit protein uS11 from Wolbachia pipientis subsp. Culex pipiens (strain wPip).